A 250-amino-acid chain; its full sequence is uncharacterized protein (250 aa).

Basic and acidic residues predominate over residues 207-226 (LNDRDAINKSEEARKAREEV). The interval 207 to 250 (LNDRDAINKSEEARKAREEVFIPSEPSKPSIASKRSSASKSTKS) is disordered. Low complexity predominate over residues 233–250 (SKPSIASKRSSASKSTKS).

The protein localises to the plastid. The protein resides in the chloroplast. This is an uncharacterized protein from Chlorella vulgaris (Green alga).